A 136-amino-acid polypeptide reads, in one-letter code: ATP synthase epsilon chain (136 aa).

Belongs to the ATPase epsilon chain family. As to quaternary structure, F-type ATPases have 2 components, CF(1) - the catalytic core - and CF(0) - the membrane proton channel. CF(1) has five subunits: alpha(3), beta(3), gamma(1), delta(1), epsilon(1). CF(0) has three main subunits: a, b and c.

It is found in the cell membrane. Produces ATP from ADP in the presence of a proton gradient across the membrane. The protein is ATP synthase epsilon chain of Ureaplasma parvum serovar 3 (strain ATCC 27815 / 27 / NCTC 11736).